The following is a 160-amino-acid chain: Ribonuclease H (160 aa).

One can recognise an RNase H type-1 domain in the interval 1–157; that stretch reads MNIEIYTDGA…CDRLAVEACQ (157 aa). Residues aspartate 8, glutamate 49, aspartate 85, and aspartate 149 each contribute to the Mg(2+) site.

The protein belongs to the RNase H family. As to quaternary structure, monomer. The cofactor is Mg(2+).

It localises to the cytoplasm. It carries out the reaction Endonucleolytic cleavage to 5'-phosphomonoester.. Endonuclease that specifically degrades the RNA of RNA-DNA hybrids. The polypeptide is Ribonuclease H (Treponema denticola (strain ATCC 35405 / DSM 14222 / CIP 103919 / JCM 8153 / KCTC 15104)).